Consider the following 367-residue polypeptide: Ribosome-binding ATPase YchF (367 aa).

The OBG-type G domain maps to 2-258 (LSAGIVGLPN…LKLEQRQYFL (257 aa)). Residue 11–16 (NVGKST) coordinates ATP. Residues Ser-15 and Thr-35 each coordinate Mg(2+). The 84-residue stretch at 281-364 (NLWSFFTFGK…KDGDVCNFKF (84 aa)) folds into the TGS domain.

The protein belongs to the TRAFAC class OBG-HflX-like GTPase superfamily. OBG GTPase family. YchF/OLA1 subfamily. Mg(2+) serves as cofactor.

Functionally, ATPase that binds to both the 70S ribosome and the 50S ribosomal subunit in a nucleotide-independent manner. This is Ribosome-binding ATPase YchF from Mycoplasma genitalium (strain ATCC 33530 / DSM 19775 / NCTC 10195 / G37) (Mycoplasmoides genitalium).